The following is a 412-amino-acid chain: Serine hydroxymethyltransferase (412 aa).

(6S)-5,6,7,8-tetrahydrofolate is bound by residues L117 and 121–123 (GHL). N6-(pyridoxal phosphate)lysine is present on K226.

Belongs to the SHMT family. In terms of assembly, homodimer. It depends on pyridoxal 5'-phosphate as a cofactor.

It localises to the cytoplasm. It carries out the reaction (6R)-5,10-methylene-5,6,7,8-tetrahydrofolate + glycine + H2O = (6S)-5,6,7,8-tetrahydrofolate + L-serine. It participates in one-carbon metabolism; tetrahydrofolate interconversion. Its pathway is amino-acid biosynthesis; glycine biosynthesis; glycine from L-serine: step 1/1. Catalyzes the reversible interconversion of serine and glycine with tetrahydrofolate (THF) serving as the one-carbon carrier. This reaction serves as the major source of one-carbon groups required for the biosynthesis of purines, thymidylate, methionine, and other important biomolecules. Also exhibits THF-independent aldolase activity toward beta-hydroxyamino acids, producing glycine and aldehydes, via a retro-aldol mechanism. This is Serine hydroxymethyltransferase from Symbiobacterium thermophilum (strain DSM 24528 / JCM 14929 / IAM 14863 / T).